Here is a 1462-residue protein sequence, read N- to C-terminus: NK-tumor recognition protein (1462 aa).

One can recognise a PPIase cyclophilin-type domain in the interval 10–175 (HFDIEINREP…ADVRVIDCGV (166 aa)). Disordered regions lie at residues 187-591 (KKRK…TMAQ) and 607-627 (VIPLSDSPPPSRWKPGQKPWK). A compositionally biased stretch (low complexity) spans 198–213 (SDSSSNSSSSSESSSE). Over residues 221 to 240 (SRRRKHKRRPKVKRSKKRRK) the composition is skewed to basic residues. Composition is skewed to basic and acidic residues over residues 241–250 (EASSSEEPRN) and 258–286 (GHSERSDTNEKRSVDSSAKREKPVVRPEE). Lys323 participates in a covalent cross-link: Glycyl lysine isopeptide (Lys-Gly) (interchain with G-Cter in SUMO2). Residues 329–345 (SGRKIKGRGTIRYHTPP) show a composition bias toward basic residues. Phosphoserine occurs at positions 379, 401, and 416. Positions 382–402 (KWSKGDKLSDPCSSRWDERSL) are enriched in basic and acidic residues. Residues 403 to 421 (SQRSRSWSYNGYYSDLSTA) show a composition bias toward polar residues. Positions 423-459 (HSGHHKKRRKEKKVKHKKKGKKQKHCRRHKQTKKRRI) are enriched in basic residues. Phosphoserine is present on residues Ser463 and Ser471. The segment covering 497 to 507 (KRDWSKSDKDV) has biased composition (basic and acidic residues). The segment covering 524-542 (HSQSYSRGSSRSRTASKSS) has biased composition (low complexity). Positions 543–568 (SHSRSRSKSRSSSKSGHRKRASKSPR) are enriched in basic residues. Glycyl lysine isopeptide (Lys-Gly) (interchain with G-Cter in SUMO2) cross-links involve residues Lys578 and Lys581. At Ser613 the chain carries Phosphoserine. Lys639 participates in a covalent cross-link: Glycyl lysine isopeptide (Lys-Gly) (interchain with G-Cter in SUMO2). Ser648 is subject to Phosphoserine. Glycyl lysine isopeptide (Lys-Gly) (interchain with G-Cter in SUMO2) cross-links involve residues Lys656 and Lys666. The segment at 658-1072 (TGSSSSYHKR…EEDLSGKHDT (415 aa)) is disordered. 2 stretches are compositionally biased toward low complexity: residues 699–725 (SRSYSRSYTRSRSLASSHSRSRSPSSR) and 736–749 (SQCSRSSSYTSISS). Residues 754-774 (RAKRRLRSSGKKNSVSHKKHS) show a composition bias toward basic residues. Residues 775 to 800 (SSSEKTLHSKYVKGRDRSSCVRKYSE) are compositionally biased toward basic and acidic residues. Low complexity predominate over residues 801–815 (SRSSLDYSSDSEQSS). Composition is skewed to basic and acidic residues over residues 823-870 (QEKE…DHLR) and 885-909 (WDSESNSERDVTKNSKNDSHPSSDK). A phosphoserine mark is found at Ser866, Ser887, Ser889, Ser891, and Ser907. Residues 910 to 922 (EEGEATSDSESEV) are compositionally biased toward acidic residues. Positions 932–969 (TTKSSTNTSLPDDNGAWKSSKQRTSTSDSEGSCSNSEN) are enriched in polar residues. Positions 988–1013 (EHTKKVKEKLKGKKDKKHKAPKRKQA) are enriched in basic residues. Residues 1022 to 1031 (FGEEEEEEID) are compositionally biased toward acidic residues. The segment covering 1032–1072 (DKQVTQESKEKKVSENNETIKDNILKTEKSSEEDLSGKHDT) has biased composition (basic and acidic residues). Lys1057 participates in a covalent cross-link: Glycyl lysine isopeptide (Lys-Gly) (interchain with G-Cter in SUMO2). Residues Ser1077 and Ser1146 each carry the phosphoserine modification. The interval 1129–1156 (MEICTPDRSSPAKVEETSPLGNARLDTP) is disordered. Thr1155 carries the post-translational modification Phosphothreonine. Lys1163 participates in a covalent cross-link: Glycyl lysine isopeptide (Lys-Gly) (interchain with G-Cter in SUMO2). The disordered stretch occupies residues 1169-1215 (EHPQAEVVKQESSMSESKVLGEVGKQDSSSASLASAGESTGKKEVAE). Lys1177 participates in a covalent cross-link: Glycyl lysine isopeptide (Lys-Gly) (interchain with G-Cter in SUMO1); alternate. Lys1177 participates in a covalent cross-link: Glycyl lysine isopeptide (Lys-Gly) (interchain with G-Cter in SUMO2); alternate. Ser1203 is modified (phosphoserine). Residues Lys1216, Lys1225, and Lys1258 each participate in a glycyl lysine isopeptide (Lys-Gly) (interchain with G-Cter in SUMO2) cross-link. Residues 1251 to 1462 (LTTVPEMKPQ…RSPSESSRYS (212 aa)) form a disordered region. The interval 1311–1348 (SRSPSRSRSKSETKSRHRTRSVSYSHSRSRSRSSTSSY) is arg/Ser tandem repeat-rich. 2 stretches are compositionally biased toward low complexity: residues 1331–1351 (SVSYSHSRSRSRSSTSSYRSR) and 1359–1376 (RGWYSRGRTRSRSSSYRS). Basic residues predominate over residues 1377-1388 (YKSHRTSSRSRS). Residues 1389-1410 (RSSSYDPHSRSRSYTYDSYYSR) show a composition bias toward low complexity. A compositionally biased stretch (basic residues) spans 1425–1435 (RGRSYNRRSRS).

The protein resides in the cell membrane. It carries out the reaction [protein]-peptidylproline (omega=180) = [protein]-peptidylproline (omega=0). With respect to regulation, inhibited by cyclosporin A (CsA). PPIase that catalyzes the cis-trans isomerization of proline imidic peptide bonds in oligopeptides and may therefore assist protein folding. Component of a putative tumor-recognition complex involved in the function of NK cells. In Homo sapiens (Human), this protein is NK-tumor recognition protein.